We begin with the raw amino-acid sequence, 714 residues long: WD repeat and coiled-coil-containing protein (714 aa).

WD repeat units lie at residues 55 to 98 (GQFE…LEQN) and 154 to 194 (KGSG…LVPC). Disordered regions lie at residues 432–454 (EEST…SENF) and 531–564 (QASR…KEKN). Residues 567-595 (QLTQNMERIFTRFAEVQQCLSEIREFTQN) adopt a coiled-coil conformation. The interval 685-714 (RSARRKSPARPPSGADDFPPESPKSPSMEK) is disordered.

In Danio rerio (Zebrafish), this protein is WD repeat and coiled-coil-containing protein (wdcp).